Consider the following 185-residue polypeptide: Peptide methionine sulfoxide reductase MsrA (185 aa).

Residue Cys12 is part of the active site.

The protein belongs to the MsrA Met sulfoxide reductase family.

It catalyses the reaction L-methionyl-[protein] + [thioredoxin]-disulfide + H2O = L-methionyl-(S)-S-oxide-[protein] + [thioredoxin]-dithiol. It carries out the reaction [thioredoxin]-disulfide + L-methionine + H2O = L-methionine (S)-S-oxide + [thioredoxin]-dithiol. Its function is as follows. Has an important function as a repair enzyme for proteins that have been inactivated by oxidation. Catalyzes the reversible oxidation-reduction of methionine sulfoxide in proteins to methionine. This chain is Peptide methionine sulfoxide reductase MsrA, found in Granulibacter bethesdensis (strain ATCC BAA-1260 / CGDNIH1).